The primary structure comprises 351 residues: Anthranilate phosphoribosyltransferase (351 aa).

5-phospho-alpha-D-ribose 1-diphosphate contacts are provided by residues glycine 84, 87–88 (GD), 95–98 (NISS), 113–121 (KHGNRGASS), and alanine 125. Glycine 84 provides a ligand contact to anthranilate. Serine 97 serves as a coordination point for Mg(2+). Residue asparagine 116 coordinates anthranilate. Arginine 171 is a binding site for anthranilate. Mg(2+)-binding residues include aspartate 229 and lysine 230.

Belongs to the anthranilate phosphoribosyltransferase family. In terms of assembly, homodimer. The cofactor is Mg(2+).

It catalyses the reaction N-(5-phospho-beta-D-ribosyl)anthranilate + diphosphate = 5-phospho-alpha-D-ribose 1-diphosphate + anthranilate. The protein operates within amino-acid biosynthesis; L-tryptophan biosynthesis; L-tryptophan from chorismate: step 2/5. In terms of biological role, catalyzes the transfer of the phosphoribosyl group of 5-phosphorylribose-1-pyrophosphate (PRPP) to anthranilate to yield N-(5'-phosphoribosyl)-anthranilate (PRA). In Clavibacter michiganensis subsp. michiganensis (strain NCPPB 382), this protein is Anthranilate phosphoribosyltransferase.